Here is a 712-residue protein sequence, read N- to C-terminus: Polyribonucleotide nucleotidyltransferase (712 aa).

Mg(2+) contacts are provided by aspartate 485 and aspartate 491. One can recognise a KH domain in the interval 552–615; that stretch reads PRIHTIKINP…EAIRRIEAIT (64 aa). In terms of domain architecture, S1 motif spans 621 to 689; the sequence is NRIYEGKVVR…RQGRVRLSIK (69 aa).

The protein belongs to the polyribonucleotide nucleotidyltransferase family. Component of the RNA degradosome, which is a multiprotein complex involved in RNA processing and mRNA degradation. Mg(2+) serves as cofactor.

The protein resides in the cytoplasm. It carries out the reaction RNA(n+1) + phosphate = RNA(n) + a ribonucleoside 5'-diphosphate. In terms of biological role, involved in mRNA degradation. Catalyzes the phosphorolysis of single-stranded polyribonucleotides processively in the 3'- to 5'-direction. This is Polyribonucleotide nucleotidyltransferase from Aeromonas hydrophila subsp. hydrophila (strain ATCC 7966 / DSM 30187 / BCRC 13018 / CCUG 14551 / JCM 1027 / KCTC 2358 / NCIMB 9240 / NCTC 8049).